The sequence spans 619 residues: Kininogen-2 (619 aa).

Residues 1–18 (MKLITILFLCSRLLPSLT) form the signal peptide. Gln-19 is subject to Pyrrolidone carboxylic acid. The Cystatin kininogen-type 1 domain maps to 27 to 131 (CNDQDVFKAV…IQTCLITPAE (105 aa)). Cystine bridges form between Cys-27–Cys-589, Cys-82–Cys-93, Cys-106–Cys-125, Cys-141–Cys-144, Cys-205–Cys-217, Cys-228–Cys-247, Cys-261–Cys-264, Cys-325–Cys-337, and Cys-348–Cys-367. N-linked (GlcNAc...) asparagine glycosylation occurs at Asn-87. O-linked (GalNAc...) threonine; partial glycosylation is present at Thr-136. In terms of domain architecture, Cystatin kininogen-type 2 spans 150–253 (TKSPDLEPVL…SQKCDLYPGE (104 aa)). N-linked (GlcNAc...) asparagine glycans are attached at residues Asn-168 and Asn-169. N-linked (GlcNAc...) asparagine; partial glycosylation is present at Asn-197. An N-linked (GlcNAc...) asparagine glycan is attached at Asn-204. The region spanning 270-373 (VDSPDLEEAL…TVNCQPLGQT (104 aa)) is the Cystatin kininogen-type 3 domain. N-linked (GlcNAc...) asparagine glycosylation is present at Asn-280. Pro-380 carries the 4-hydroxyproline modification. Positions 394–495 (EGSTTVSLPH…GKNNGKHYDW (102 aa)) are disordered. An O-linked (GalNAc...) serine glycan is attached at Ser-396. 2 O-linked (GalNAc...) threonine glycosylation sites follow: Thr-397 and Thr-398. Residues Ser-400 and Ser-404 are each glycosylated (O-linked (GalNAc...) serine). Positions 442–490 (GHKHKHDQGHGHHRSHGLGHGHQKQHGLGHGHKHGHGHGKHKNKGKNNG) are enriched in basic residues. A glycan (O-linked (GalNAc...) serine) is linked at Ser-510. 6 O-linked (GalNAc...) threonine glycosylation sites follow: Thr-518, Thr-522, Thr-534, Thr-546, Thr-551, and Thr-568.

In terms of processing, bradykinin is released from kininogen by plasma kallikrein. As to expression, plasma.

It localises to the secreted. The protein localises to the extracellular space. Its function is as follows. (1) Kininogens are inhibitors of thiol proteases; (2) HMW-kininogen plays an important role in blood coagulation by helping to position optimally prekallikrein and factor XI next to factor XII; (3) HMW-kininogen inhibits the thrombin- and plasmin-induced aggregation of thrombocytes; (4) the active peptide bradykinin that is released from HMW-kininogen shows a variety of physiological effects: (4A) influence in smooth muscle contraction, (4B) induction of hypotension, (4C) natriuresis and diuresis, (4D) decrease in blood glucose level, (4E) it is a mediator of inflammation and causes (4E1) increase in vascular permeability, (4E2) stimulation of nociceptors (4E3) release of other mediators of inflammation (e.g. prostaglandins), (4F) it has a cardioprotective effect (directly via bradykinin action, indirectly via endothelium-derived relaxing factor action); (5) LMW-kininogen inhibits the aggregation of thrombocytes; (6) LMW-kininogen is in contrast to HMW-kininogen not involved in blood clotting. The protein is Kininogen-2 (KNG2) of Bos taurus (Bovine).